The chain runs to 121 residues: MSKLTIEQFIAAIKEMSMLELNDLVKAIETEFGVSAAAPVAAAAAPVAAEAPTEVTIKLVEAGTNKVGVIKLIREITGLGLMEAKTAAETAGSVIKEDVKTEEANEIKKKFDELGAKVQLV.

This sequence belongs to the bacterial ribosomal protein bL12 family. As to quaternary structure, homodimer. Part of the ribosomal stalk of the 50S ribosomal subunit. Forms a multimeric L10(L12)X complex, where L10 forms an elongated spine to which 2 to 4 L12 dimers bind in a sequential fashion. Binds GTP-bound translation factors.

Functionally, forms part of the ribosomal stalk which helps the ribosome interact with GTP-bound translation factors. Is thus essential for accurate translation. The sequence is that of Large ribosomal subunit protein bL12 from Ureaplasma parvum serovar 3 (strain ATCC 27815 / 27 / NCTC 11736).